A 506-amino-acid polypeptide reads, in one-letter code: Acrylate reductase flavoprotein subunit (506 aa).

The tat-type signal signal peptide spans 1-30 (MSNKDLLGRRNFIKGMGAAAGVAMAAPALA). Residues alanine 54, glutamate 74, asparagine 82, glycine 87, and glycine 88 each coordinate FAD. Arginine 333 functions as the Proton donor in the catalytic mechanism. The FAD site is built by glutamate 473 and isoleucine 489.

Belongs to the FAD-dependent oxidoreductase 2 family. FRD/SDH subfamily. As to quaternary structure, the ArdAB flavocytochrome c is composed of a FAD-containing subunit (ArdA) and a heme c-containing subunit (ArdB). FAD is required as a cofactor. Post-translationally, predicted to be exported by the Tat system. The position of the signal peptide cleavage has not been experimentally proven.

The protein localises to the periplasm. Methacrylate acts as a competitive inhibitor of the acrylate reductase activity and suppresses the reductase activity in dose-dependent manner. Functionally, FAD-containing subunit of the ArdAB flavocytochrome c, which catalyzes the reduction of acrylate to propanoate and supports dimethylsulfoniopropionate-dependent anaerobic respiration. In vitro, can use the artificial electron donor methyl viologen. The natural electron donor is probably a low-potential cytochrome c. Also shows weak activity toward methacrylate in vitro (at a 22-fold lower rate) but cannot use other tested 2-enoates, including crotonic, fumaric, sorbic, urocanic, cinnamic, p-coumaric, caffeic or ferulic acids. The protein catalyzes a unidirectional reaction and cannot oxidize propanoate with phenazine metasulfate and dichlorophenolindophenol as electron acceptors. This chain is Acrylate reductase flavoprotein subunit, found in Shewanella woodyi (strain ATCC 51908 / MS32).